A 454-amino-acid polypeptide reads, in one-letter code: Aminodeoxychorismate synthase component 1 (454 aa).

Residues Ser-37, Tyr-44–Phe-47, and Pro-241–Ser-243 contribute to the L-tryptophan site. Glu-259 (proton donor) is an active-site residue. Lys-275 acts as the N6-(4-deoxychorismate)-lysine intermediate in catalysis.

It belongs to the anthranilate synthase component I family. In terms of assembly, monomer. Heterodimer consisting of two non-identical subunits: a glutamine amidotransferase subunit (PabA) and a aminodeoxychorismate synthase subunit (PabB). The cofactor is Mg(2+).

It catalyses the reaction chorismate + L-glutamine = 4-amino-4-deoxychorismate + L-glutamate. It functions in the pathway cofactor biosynthesis; tetrahydrofolate biosynthesis; 4-aminobenzoate from chorismate: step 1/2. Functionally, part of a heterodimeric complex that catalyzes the two-step biosynthesis of 4-amino-4-deoxychorismate (ADC), a precursor of p-aminobenzoate (PABA) and tetrahydrofolate. In the first step, a glutamine amidotransferase (PabA) generates ammonia as a substrate that, along with chorismate, is used in the second step, catalyzed by aminodeoxychorismate synthase (PabB) to produce ADC. This Salmonella typhimurium (strain LT2 / SGSC1412 / ATCC 700720) protein is Aminodeoxychorismate synthase component 1 (pabB).